Here is a 166-residue protein sequence, read N- to C-terminus: Ribosome maturation factor RimM (166 aa).

One can recognise a PRC barrel domain in the interval 94 to 165; that stretch reads EGEYYLGKLI…TIELKVLDLL (72 aa).

It belongs to the RimM family. Binds ribosomal protein uS19.

It localises to the cytoplasm. Its function is as follows. An accessory protein needed during the final step in the assembly of 30S ribosomal subunit, possibly for assembly of the head region. Essential for efficient processing of 16S rRNA. May be needed both before and after RbfA during the maturation of 16S rRNA. It has affinity for free ribosomal 30S subunits but not for 70S ribosomes. This is Ribosome maturation factor RimM from Borreliella afzelii (strain PKo) (Borrelia afzelii).